The following is a 515-amino-acid chain: Maturase K (515 aa).

Belongs to the intron maturase 2 family. MatK subfamily.

It is found in the plastid. It localises to the chloroplast. Usually encoded in the trnK tRNA gene intron. Probably assists in splicing its own and other chloroplast group II introns. This is Maturase K from Alpinia zerumbet (Shell ginger).